A 943-amino-acid chain; its full sequence is Isoleucine--tRNA ligase (943 aa).

The short motif at 59-69 is the 'HIGH' region element; sequence PYANGQIHLGH. Glu-577 is a binding site for L-isoleucyl-5'-AMP. Residues 618–622 carry the 'KMSKS' region motif; it reads KMSKS. An ATP-binding site is contributed by Lys-621. Residues Cys-906, Cys-909, Cys-926, and Cys-929 each coordinate Zn(2+).

The protein belongs to the class-I aminoacyl-tRNA synthetase family. IleS type 1 subfamily. Monomer. Requires Zn(2+) as cofactor.

Its subcellular location is the cytoplasm. It catalyses the reaction tRNA(Ile) + L-isoleucine + ATP = L-isoleucyl-tRNA(Ile) + AMP + diphosphate. In terms of biological role, catalyzes the attachment of isoleucine to tRNA(Ile). As IleRS can inadvertently accommodate and process structurally similar amino acids such as valine, to avoid such errors it has two additional distinct tRNA(Ile)-dependent editing activities. One activity is designated as 'pretransfer' editing and involves the hydrolysis of activated Val-AMP. The other activity is designated 'posttransfer' editing and involves deacylation of mischarged Val-tRNA(Ile). The chain is Isoleucine--tRNA ligase from Xanthomonas campestris pv. campestris (strain 8004).